The chain runs to 515 residues: SWI/SNF-related matrix-associated actin-dependent regulator of chromatin subfamily D member 1 (515 aa).

The interval 1–128 (MAARAGFQSV…RNHNAKKKKM (128 aa)) is disordered. The span at 14-23 (GGAGASGGAG) shows a compositional bias: gly residues. The segment at 43–167 (APGQGLYRSP…DQTIMRKRLD (125 aa)) is interaction with ESR1, NR1H4, NR3C1, PGR and SMARCA4. Asymmetric dimethylarginine is present on residues Arg68 and Arg88. Lys101 participates in a covalent cross-link: Glycyl lysine isopeptide (Lys-Gly) (interchain with G-Cter in SUMO2). Residues 103–117 (PAPQQIKQVQQQAVQ) show a composition bias toward low complexity. The tract at residues 168 to 474 (IQEALKRPIK…VMTDVVGNSE (307 aa)) is interaction with SMARCC1 and SMARCC2. Positions 180–515 (RKLRIFISNT…LEQALGIRNT (336 aa)) are necessary for GR/NR3C1-mediated remodeling and transcription from chromatin; required for GR/NR3C1 interaction with the BRG1/SMARCA4 complex in vivo. A Phosphothreonine modification is found at Thr203. Lys223 carries the N6-acetyllysine modification. Residues 290–367 (YQPPQFKLDP…PQRLHALLMP (78 aa)) enclose the SWIB/MDM2 domain. A coiled-coil region spans residues 412-440 (ASQQEIATLDNKIHETIETINQLKTQREF).

This sequence belongs to the SMARCD family. As to quaternary structure, component of the multiprotein chromatin-remodeling complexes SWI/SNF: SWI/SNF-A (BAF), SWI/SNF-B (PBAF) and related complexes. The canonical complex contains a catalytic subunit (either SMARCA4/BRG1/BAF190A or SMARCA2/BRM/BAF190B), and at least SMARCE1, ACTL6A/BAF53, SMARCC1/BAF155, SMARCC2/BAF170, and SMARCB1/SNF5/BAF47. Other subunits specific to each of the complexes may also be present permitting several possible combinations developmentally and tissue specific. Component of the BAF complex, which includes at least actin (ACTB), ARID1A/BAF250A, ARID1B/BAF250B, SMARCA2/BRM, SMARCA4/BRG1/BAF190A, ACTL6A/BAF53, ACTL6B/BAF53B, SMARCE1/BAF57, SMARCC1/BAF155, SMARCC2/BAF170, SMARCB1/SNF5/INI1, and one or more SMARCD1/BAF60A, SMARCD2/BAF60B, or SMARCD3/BAF60C. In muscle cells, the BAF complex also contains DPF3. Component of neural progenitors-specific chromatin remodeling complex (npBAF complex) composed of at least, ARID1A/BAF250A or ARID1B/BAF250B, SMARCD1/BAF60A, SMARCD3/BAF60C, SMARCA2/BRM/BAF190B, SMARCA4/BRG1/BAF190A, SMARCB1/BAF47, SMARCC1/BAF155, SMARCE1/BAF57, SMARCC2/BAF170, PHF10/BAF45A, ACTL6A/BAF53A and actin. Component of neuron-specific chromatin remodeling complex (nBAF complex) composed of at least, ARID1A/BAF250A or ARID1B/BAF250B, SMARCD1/BAF60A, SMARCD3/BAF60C, SMARCA2/BRM/BAF190B, SMARCA4/BRG1/BAF190A, SMARCB1/BAF47, SMARCC1/BAF155, SMARCE1/BAF57, SMARCC2/BAF170, DPF1/BAF45B, DPF3/BAF45C, ACTL6B/BAF53B and actin. Component of the SWI/SNF-B (PBAF) chromatin remodeling complex, at least composed of SMARCA4/BRG1, SMARCB1/BAF47/SNF5, ACTL6A/BAF53A or ACTL6B/BAF53B, SMARCE1/BAF57, SMARCD1/BAF60A, SMARCD2/BAF60B, perhaps SMARCD3/BAF60C, SMARCC1/BAF155, SMARCC2/BAF170, PBRM1/BAF180, ARID2/BAF200 and actin (ACTB). Component of SWI/SNF (GBAF) subcomplex, which includes at least BICRA or BICRAL (mutually exclusive), BRD9, SS18, SMARCA2/BRM, SMARCA4/BRG1/BAF190A, ACTL6A/BAF53, SMARCC1/BAF155, and SMARCD1/BAF60A. Specifically interacts with the VDR heterodimer complex. Interacts with ESR1, NR3C1, NR1H4, PGR, SMARCA4, SMARCC1 and SMARCC2. Interacts with DPF2. Interacts with FOS, FOSB, FOSL1 and FOSL2.

It is found in the nucleus. Involved in transcriptional activation and repression of select genes by chromatin remodeling (alteration of DNA-nucleosome topology). Component of SWI/SNF chromatin remodeling complexes that carry out key enzymatic activities, changing chromatin structure by altering DNA-histone contacts within a nucleosome in an ATP-dependent manner. Belongs to the neural progenitors-specific chromatin remodeling complex (npBAF complex) and the neuron-specific chromatin remodeling complex (nBAF complex). During neural development a switch from a stem/progenitor to a postmitotic chromatin remodeling mechanism occurs as neurons exit the cell cycle and become committed to their adult state. The transition from proliferating neural stem/progenitor cells to postmitotic neurons requires a switch in subunit composition of the npBAF and nBAF complexes. As neural progenitors exit mitosis and differentiate into neurons, npBAF complexes which contain ACTL6A/BAF53A and PHF10/BAF45A, are exchanged for homologous alternative ACTL6B/BAF53B and DPF1/BAF45B or DPF3/BAF45C subunits in neuron-specific complexes (nBAF). The npBAF complex is essential for the self-renewal/proliferative capacity of the multipotent neural stem cells. The nBAF complex along with CREST plays a role regulating the activity of genes essential for dendrite growth. Has a strong influence on vitamin D-mediated transcriptional activity from an enhancer vitamin D receptor element (VDRE). May be a link between mammalian SWI-SNF-like chromatin remodeling complexes and the vitamin D receptor (VDR) heterodimer. Mediates critical interactions between nuclear receptors and the BRG1/SMARCA4 chromatin-remodeling complex for transactivation. Interacts with AKIRIN2. In Bos taurus (Bovine), this protein is SWI/SNF-related matrix-associated actin-dependent regulator of chromatin subfamily D member 1 (SMARCD1).